Reading from the N-terminus, the 75-residue chain is Small capsomere-interacting protein (75 aa).

This sequence belongs to the herpesviridae small capsomere-interacting protein family. Interacts with the major capsid protein/MCP.

It localises to the virion. Its subcellular location is the host nucleus. Its function is as follows. Participates in the assembly of the infectious particles by decorating the outer surface of the capsid shell and thus forming a layer between the capsid and the tegument. Complexes composed of the capsid protein VP5 and UL48A assemble together in the host cytoplasm and are translocated to the nucleus, where they accumulate and participate in capsid assembly. Functionally, participates in the assembly of the infectious particles by decorating the outer surface of the capsid shell and thus forming a layer between the capsid and the tegument. Complexes composed of the major capsid protein and small capsomere-interacting protein/SCP assemble together in the host cytoplasm and are translocated to the nucleus, where they accumulate and participate in capsid assembly. In Homo sapiens (Human), this protein is Small capsomere-interacting protein.